The sequence spans 168 residues: S-ribosylhomocysteine lyase (168 aa).

H54, H58, and C128 together coordinate Fe cation.

The protein belongs to the LuxS family. Homodimer. It depends on Fe cation as a cofactor.

The enzyme catalyses S-(5-deoxy-D-ribos-5-yl)-L-homocysteine = (S)-4,5-dihydroxypentane-2,3-dione + L-homocysteine. In terms of biological role, involved in the synthesis of autoinducer 2 (AI-2) which is secreted by bacteria and is used to communicate both the cell density and the metabolic potential of the environment. The regulation of gene expression in response to changes in cell density is called quorum sensing. Catalyzes the transformation of S-ribosylhomocysteine (RHC) to homocysteine (HC) and 4,5-dihydroxy-2,3-pentadione (DPD). This Neisseria meningitidis serogroup C / serotype 2a (strain ATCC 700532 / DSM 15464 / FAM18) protein is S-ribosylhomocysteine lyase.